The primary structure comprises 400 residues: Argininosuccinate synthase (400 aa).

Residue 8 to 16 (AYSGGLDTS) participates in ATP binding. Positions 87 and 92 each coordinate L-citrulline. Gly117 contacts ATP. Residues Thr119, Asn123, and Asp124 each contribute to the L-aspartate site. Position 123 (Asn123) interacts with L-citrulline. 4 residues coordinate L-citrulline: Arg127, Ser175, Glu259, and Tyr271.

It belongs to the argininosuccinate synthase family. Type 1 subfamily. In terms of assembly, homotetramer.

It is found in the cytoplasm. The catalysed reaction is L-citrulline + L-aspartate + ATP = 2-(N(omega)-L-arginino)succinate + AMP + diphosphate + H(+). It functions in the pathway amino-acid biosynthesis; L-arginine biosynthesis; L-arginine from L-ornithine and carbamoyl phosphate: step 2/3. The protein is Argininosuccinate synthase of Parafrankia sp. (strain EAN1pec).